Consider the following 220-residue polypeptide: Large ribosomal subunit protein uL3 (220 aa).

This sequence belongs to the universal ribosomal protein uL3 family. As to quaternary structure, part of the 50S ribosomal subunit. Forms a cluster with proteins L14 and L19.

In terms of biological role, one of the primary rRNA binding proteins, it binds directly near the 3'-end of the 23S rRNA, where it nucleates assembly of the 50S subunit. This is Large ribosomal subunit protein uL3 from Staphylococcus carnosus (strain TM300).